Here is a 927-residue protein sequence, read N- to C-terminus: Translation initiation factor IF-2 (927 aa).

Residues 27 to 338 form a disordered region; it reads LGLPVKSHAS…APKPVTERKF (312 aa). Over residues 49–69 the composition is skewed to polar residues; it reads SFSSSKTKAPTNSVQTNQGVK. 2 stretches are compositionally biased toward basic and acidic residues: residues 70-86 and 101-138; these read TESK…DDKP and FKAE…DRRH. A compositionally biased stretch (low complexity) spans 146–159; it reads GNRNDNRQGQQNNR. 3 stretches are compositionally biased toward basic and acidic residues: residues 160 to 171, 202 to 226, and 234 to 257; these read NKNDGRYADHKQ, YSRH…EQEL, and AQEE…KEIV. Residues 300–316 are compositionally biased toward low complexity; that stretch reads NWNNQNQVRNQRNSNWN. A tr-type G domain is found at 428 to 597; that stretch reads ERPPVVTIMG…LLVAEMEELK (170 aa). The segment at 437–444 is G1; sequence GHVDHGKT. 437 to 444 is a binding site for GTP; it reads GHVDHGKT. Positions 462–466 are G2; the sequence is GITQH. The segment at 483-486 is G3; the sequence is DTPG. GTP contacts are provided by residues 483-487 and 537-540; these read DTPGH and NKID. A G4 region spans residues 537–540; the sequence is NKID. Positions 573-575 are G5; it reads SAK.

The protein belongs to the TRAFAC class translation factor GTPase superfamily. Classic translation factor GTPase family. IF-2 subfamily.

The protein localises to the cytoplasm. One of the essential components for the initiation of protein synthesis. Protects formylmethionyl-tRNA from spontaneous hydrolysis and promotes its binding to the 30S ribosomal subunits. Also involved in the hydrolysis of GTP during the formation of the 70S ribosomal complex. In Streptococcus agalactiae serotype Ia (strain ATCC 27591 / A909 / CDC SS700), this protein is Translation initiation factor IF-2.